A 185-amino-acid polypeptide reads, in one-letter code: Ribosome-recycling factor (185 aa).

This sequence belongs to the RRF family.

It is found in the cytoplasm. Responsible for the release of ribosomes from messenger RNA at the termination of protein biosynthesis. May increase the efficiency of translation by recycling ribosomes from one round of translation to another. This is Ribosome-recycling factor from Ehrlichia ruminantium (strain Gardel).